Consider the following 211-residue polypeptide: Uridine kinase (211 aa).

15–22 (GGSGSGKT) is a binding site for ATP.

The protein belongs to the uridine kinase family.

It is found in the cytoplasm. It carries out the reaction uridine + ATP = UMP + ADP + H(+). It catalyses the reaction cytidine + ATP = CMP + ADP + H(+). It functions in the pathway pyrimidine metabolism; CTP biosynthesis via salvage pathway; CTP from cytidine: step 1/3. Its pathway is pyrimidine metabolism; UMP biosynthesis via salvage pathway; UMP from uridine: step 1/1. The polypeptide is Uridine kinase (Lactobacillus helveticus (strain DPC 4571)).